We begin with the raw amino-acid sequence, 708 residues long: UvrABC system protein B (708 aa).

Residues 32–419 (EGIQSGKTAQ…GGEVVEQIIR (388 aa)) enclose the Helicase ATP-binding domain. 45-52 (GATGTGKT) is a binding site for ATP. The Beta-hairpin motif lies at 98 to 121 (YYDYYQPEAYIPQRDVYIEKDSSI). The region spanning 436 to 598 (QVTHLLEQVR…IVPKTVRKSI (163 aa)) is the Helicase C-terminal domain. One can recognise a UVR domain in the interval 627-662 (IEYVDKLEQEMLAAAEDLEFERAARLRDRVLQLKEH). The disordered stretch occupies residues 668–708 (SEVEIVDEKSAGKSGGRGRGRRGAKKKGASKGTKIPRPKRG). Over residues 683–708 (GRGRGRRGAKKKGASKGTKIPRPKRG) the composition is skewed to basic residues.

Belongs to the UvrB family. In terms of assembly, forms a heterotetramer with UvrA during the search for lesions. Interacts with UvrC in an incision complex.

It is found in the cytoplasm. Its function is as follows. The UvrABC repair system catalyzes the recognition and processing of DNA lesions. A damage recognition complex composed of 2 UvrA and 2 UvrB subunits scans DNA for abnormalities. Upon binding of the UvrA(2)B(2) complex to a putative damaged site, the DNA wraps around one UvrB monomer. DNA wrap is dependent on ATP binding by UvrB and probably causes local melting of the DNA helix, facilitating insertion of UvrB beta-hairpin between the DNA strands. Then UvrB probes one DNA strand for the presence of a lesion. If a lesion is found the UvrA subunits dissociate and the UvrB-DNA preincision complex is formed. This complex is subsequently bound by UvrC and the second UvrB is released. If no lesion is found, the DNA wraps around the other UvrB subunit that will check the other stand for damage. This Rhodopirellula baltica (strain DSM 10527 / NCIMB 13988 / SH1) protein is UvrABC system protein B.